We begin with the raw amino-acid sequence, 716 residues long: 1,4-alpha-glucan branching enzyme GlgB (716 aa).

Asp399 functions as the Nucleophile in the catalytic mechanism. Residue Glu452 is the Proton donor of the active site.

This sequence belongs to the glycosyl hydrolase 13 family. GlgB subfamily. Monomer.

The catalysed reaction is Transfers a segment of a (1-&gt;4)-alpha-D-glucan chain to a primary hydroxy group in a similar glucan chain.. The protein operates within glycan biosynthesis; glycogen biosynthesis. In terms of biological role, catalyzes the formation of the alpha-1,6-glucosidic linkages in glycogen by scission of a 1,4-alpha-linked oligosaccharide from growing alpha-1,4-glucan chains and the subsequent attachment of the oligosaccharide to the alpha-1,6 position. This is 1,4-alpha-glucan branching enzyme GlgB from Rhodopseudomonas palustris (strain ATCC BAA-98 / CGA009).